Consider the following 358-residue polypeptide: Fructose-bisphosphate aldolase 7, cytosolic (358 aa).

At S2 the chain carries N-acetylserine. R52 is a substrate binding site. C68 carries the post-translational modification S-glutathionyl cysteine; transient. Residue K142 participates in substrate binding. C173 is modified (S-glutathionyl cysteine; transient; alternate). Residue C173 is modified to S-nitrosocysteine; transient; alternate. E183 serves as the catalytic Proton acceptor. K225 functions as the Schiff-base intermediate with dihydroxyacetone-P in the catalytic mechanism. A substrate-binding site is contributed by 266–268 (SGI).

This sequence belongs to the class I fructose-bisphosphate aldolase family. In terms of assembly, homotetramer. In terms of processing, S-glutathionylated at Cys-68 and Cys-173. S-nitrosylated at Cys-173. As to expression, highly expressed in flowers, and at lower levels in rosettes leaves and cauline leaves.

The protein resides in the cytoplasm. It is found in the cytosol. It carries out the reaction beta-D-fructose 1,6-bisphosphate = D-glyceraldehyde 3-phosphate + dihydroxyacetone phosphate. Its pathway is carbohydrate degradation; glycolysis; D-glyceraldehyde 3-phosphate and glycerone phosphate from D-glucose: step 4/4. Plays a key role in glycolysis and gluconeogenesis. The protein is Fructose-bisphosphate aldolase 7, cytosolic of Arabidopsis thaliana (Mouse-ear cress).